Reading from the N-terminus, the 324-residue chain is Rho crystallin (324 aa).

Threonine 2 carries the N-acetylthreonine modification. Residue 218–281 (SVLGSHRDRN…SFTPARIKQN (64 aa)) participates in NADP(+) binding.

The protein belongs to the aldo/keto reductase family. Monomer.

The polypeptide is Rho crystallin (Aquarana catesbeiana (American bullfrog)).